Reading from the N-terminus, the 28-residue chain is Potassium channel toxin kappa-KTx 2.9 (28 aa).

Cystine bridges form between Cys-4/Cys-22 and Cys-8/Cys-18.

This sequence belongs to the short scorpion toxin superfamily. Potassium channel inhibitor family. Gamma-KTx 2 subfamily. Post-translationally, contains 2 disulfide bonds. Expressed by the venom gland.

It is found in the secreted. Functionally, reversibly blocks voltage-gated potassium channels Kv1.2/KCNA2 and Kv1.3/KCNA3. The chain is Potassium channel toxin kappa-KTx 2.9 from Pandinus imperator (Emperor scorpion).